The following is a 250-amino-acid chain: MKYNNHDKIRDFIIIEAYMFRFKKKVKPEVDMTIKEFILLTYLFHQQENTLPFKKIVSDLCYKQSDLVQHIKVLVKHSYISKVRSKIDERNTYISISEEQREKIAERVTLFDQIIKQFNLADQSESQMIPKDSKEFLNLMMYTMYFKNIIKKHLTLSFVEFTILAIITSQNKNIVLLKDLIETIHHKYPQTVRALNNLKKQGYLIKERSTEDERKILIHMDDAQQDHAEQLLAQVNQLLADKDHLHLVFE.

DNA-binding regions (H-T-H motif) lie at residues 53 to 76 (FKKI…VLVK) and 177 to 200 (LKDL…NLKK).

Belongs to the SarA family.

The protein resides in the cytoplasm. Transcriptional regulator that controls expression of some virulence factors in a cell density-dependent manner. The chain is HTH-type transcriptional regulator SarS (sarS) from Staphylococcus aureus (strain Mu3 / ATCC 700698).